The chain runs to 160 residues: Phosphopantetheine adenylyltransferase (160 aa).

Serine 10 lines the substrate pocket. ATP-binding positions include 10–11 and histidine 18; that span reads SF. Residues lysine 42, leucine 74, and arginine 88 each contribute to the substrate site. Residues 89-91, glutamate 99, and 124-130 contribute to the ATP site; these read GLR and YSFLSSS.

It belongs to the bacterial CoaD family. As to quaternary structure, homohexamer. Mg(2+) is required as a cofactor.

It is found in the cytoplasm. It catalyses the reaction (R)-4'-phosphopantetheine + ATP + H(+) = 3'-dephospho-CoA + diphosphate. The protein operates within cofactor biosynthesis; coenzyme A biosynthesis; CoA from (R)-pantothenate: step 4/5. Reversibly transfers an adenylyl group from ATP to 4'-phosphopantetheine, yielding dephospho-CoA (dPCoA) and pyrophosphate. This Bacillus velezensis (strain DSM 23117 / BGSC 10A6 / LMG 26770 / FZB42) (Bacillus amyloliquefaciens subsp. plantarum) protein is Phosphopantetheine adenylyltransferase.